The primary structure comprises 163 residues: CASP-like protein 1C2 (163 aa).

The Cytoplasmic segment spans residues 1–6 (MAKSNK). The chain crosses the membrane as a helical span at residues 7-27 (IFTNTLRLLALAATVVAIVFM). Topologically, residues 28 to 52 (VTSHDSAQVLNLTFTAKYSNTPAFK) are extracellular. N38 carries an N-linked (GlcNAc...) asparagine glycan. A helical membrane pass occupies residues 53-73 (FLVIGEAIAGGYTVISILLSF). Residues 74–79 (KGLFWR) lie on the Cytoplasmic side of the membrane. A helical transmembrane segment spans residues 80–100 (LIVILDMVTTVLLTSSISAAL). Topologically, residues 101–128 (AIAQVGKKGNTHAGWLPICGQVPDFCDY) are extracellular. A helical membrane pass occupies residues 129-149 (VTIALIAGFAAAIIYFVLLLC). Over 150-163 (SLYVVLSPIFVATP) the chain is Cytoplasmic.

Belongs to the Casparian strip membrane proteins (CASP) family. As to quaternary structure, homodimer and heterodimers.

It localises to the cell membrane. In Populus trichocarpa (Western balsam poplar), this protein is CASP-like protein 1C2.